Here is a 239-residue protein sequence, read N- to C-terminus: Lactate utilization protein A (239 aa).

It belongs to the LutA/YkgE family.

In terms of biological role, is involved in L-lactate degradation and allows cells to grow with lactate as the sole carbon source. The polypeptide is Lactate utilization protein A (Geobacillus kaustophilus (strain HTA426)).